Consider the following 377-residue polypeptide: Protein RecA (377 aa).

65-72 (GPESSGKT) contacts ATP. The segment at 329–377 (GDEEAAATKATETKTDAPKDKDKGKTKAKDKPADVTPGQIELAPDKSAK) is disordered. A compositionally biased stretch (basic and acidic residues) spans 339-361 (TETKTDAPKDKDKGKTKAKDKPA).

Belongs to the RecA family.

The protein localises to the cytoplasm. Can catalyze the hydrolysis of ATP in the presence of single-stranded DNA, the ATP-dependent uptake of single-stranded DNA by duplex DNA, and the ATP-dependent hybridization of homologous single-stranded DNAs. It interacts with LexA causing its activation and leading to its autocatalytic cleavage. This is Protein RecA from Levilactobacillus brevis (strain ATCC 367 / BCRC 12310 / CIP 105137 / JCM 1170 / LMG 11437 / NCIMB 947 / NCTC 947) (Lactobacillus brevis).